A 465-amino-acid chain; its full sequence is 23S rRNA (uracil(1939)-C(5))-methyltransferase RlmD (465 aa).

Positions 1–22 (MSEAVPTSARKSRNAPVAPGPA) are disordered. The TRAM domain occupies 16-80 (PVAPGPAPVL…PSYEQATVVD (65 aa)). Residues C93, C99, C102, and C181 each coordinate [4Fe-4S] cluster. S-adenosyl-L-methionine is bound by residues Q289, F318, N323, E339, N367, and D388. The active-site Nucleophile is the C421.

It belongs to the class I-like SAM-binding methyltransferase superfamily. RNA M5U methyltransferase family. RlmD subfamily.

It catalyses the reaction uridine(1939) in 23S rRNA + S-adenosyl-L-methionine = 5-methyluridine(1939) in 23S rRNA + S-adenosyl-L-homocysteine + H(+). Catalyzes the formation of 5-methyl-uridine at position 1939 (m5U1939) in 23S rRNA. This chain is 23S rRNA (uracil(1939)-C(5))-methyltransferase RlmD, found in Burkholderia lata (strain ATCC 17760 / DSM 23089 / LMG 22485 / NCIMB 9086 / R18194 / 383).